We begin with the raw amino-acid sequence, 144 residues long: Large ribosomal subunit protein uL16 (144 aa).

Belongs to the universal ribosomal protein uL16 family. Part of the 50S ribosomal subunit.

Its function is as follows. Binds 23S rRNA and is also seen to make contacts with the A and possibly P site tRNAs. This Bacillus pumilus (strain SAFR-032) protein is Large ribosomal subunit protein uL16.